The sequence spans 553 residues: Ribonuclease J 2 (553 aa).

Zn(2+) is bound by residues histidine 69, histidine 71, histidine 138, and aspartate 160. A substrate-binding site is contributed by arginine 361–histidine 365.

This sequence belongs to the metallo-beta-lactamase superfamily. RNA-metabolizing metallo-beta-lactamase-like family. Bacterial RNase J subfamily. Homodimer, may be a subunit of the RNA degradosome. Zn(2+) serves as cofactor.

It localises to the cytoplasm. An RNase that has 5'-3' exonuclease and possibly endonuclease activity. Involved in maturation of rRNA and in some organisms also mRNA maturation and/or decay. Has an overlapping but not completely redundant role with RNase J1 in the decay of mRNA. This is Ribonuclease J 2 from Streptococcus pyogenes serotype M3 (strain ATCC BAA-595 / MGAS315).